The following is a 212-amino-acid chain: 7-carboxy-7-deazaguanine synthase (212 aa).

Residues 22-24 and Arg-37 each bind substrate; that span reads LQG. Residues 28 to 212 form the Radical SAM core domain; sequence NTGMPAVFVR…VQTHKWAGIE (185 aa). Residues Cys-41, Cys-45, and Cys-48 each contribute to the [4Fe-4S] cluster site. Thr-50 contributes to the Mg(2+) binding site. Thr-78 is a substrate binding site. Residues Gly-80 and 122 to 124 each bind S-adenosyl-L-methionine; that span reads SPK.

Belongs to the radical SAM superfamily. 7-carboxy-7-deazaguanine synthase family. As to quaternary structure, homodimer. It depends on [4Fe-4S] cluster as a cofactor. Requires S-adenosyl-L-methionine as cofactor. Mg(2+) is required as a cofactor.

It carries out the reaction 6-carboxy-5,6,7,8-tetrahydropterin + H(+) = 7-carboxy-7-deazaguanine + NH4(+). It participates in purine metabolism; 7-cyano-7-deazaguanine biosynthesis. In terms of biological role, catalyzes the complex heterocyclic radical-mediated conversion of 6-carboxy-5,6,7,8-tetrahydropterin (CPH4) to 7-carboxy-7-deazaguanine (CDG), a step common to the biosynthetic pathways of all 7-deazapurine-containing compounds. This Neisseria meningitidis serogroup B (strain ATCC BAA-335 / MC58) protein is 7-carboxy-7-deazaguanine synthase.